Reading from the N-terminus, the 311-residue chain is Protoheme IX farnesyltransferase (311 aa).

Transmembrane regions (helical) follow at residues 32–52, 53–73, 98–118, 120–140, 153–173, 180–200, 226–246, 248–268, and 285–305; these read VMSL…VVVD, PLYG…AGAL, ISRG…VFLM, VLIN…YIVI, IVIG…AATG, FLLF…LCLF, ILVY…TGYA, IIYG…AYRL, and FFFS…EFLI.

It belongs to the UbiA prenyltransferase family. Protoheme IX farnesyltransferase subfamily.

The protein localises to the cell inner membrane. The catalysed reaction is heme b + (2E,6E)-farnesyl diphosphate + H2O = Fe(II)-heme o + diphosphate. The protein operates within porphyrin-containing compound metabolism; heme O biosynthesis; heme O from protoheme: step 1/1. Converts heme B (protoheme IX) to heme O by substitution of the vinyl group on carbon 2 of heme B porphyrin ring with a hydroxyethyl farnesyl side group. This Bartonella bacilliformis (strain ATCC 35685 / KC583 / Herrer 020/F12,63) protein is Protoheme IX farnesyltransferase.